A 468-amino-acid chain; its full sequence is Midnolin (468 aa).

Positions 31–105 (MSLAIHSTTG…LTLVPTVEAG (75 aa)) constitute a Ubiquitin-like domain. Disordered stretches follow at residues 182-264 (PSIA…RSRK) and 404-447 (LRRK…LGLD). Residues 185 to 201 (ASPVSSPCRPVSSAARV) are compositionally biased toward low complexity. The segment covering 202 to 213 (PPVPTSPSPASP) has biased composition (pro residues). 2 stretches are compositionally biased toward low complexity: residues 237-260 (SPTASSSASPGASTTSTPGASPAP) and 419-431 (SPSRKAGRSDSSS).

As to quaternary structure, interacts with GCK; the interaction occurs preferentially at low glucose levels. Interacts with the proteasome.

It is found in the nucleus. Its subcellular location is the nucleolus. It localises to the cytoplasm. The protein localises to the cytosol. Functionally, facilitates the ubiquitin-independent proteasomal degradation of stimulus-induced transcription factors such as FOSB, EGR1, NR4A1, and IRF4 to the proteasome for degradation. Promotes also the degradation of other substrates such as CBX4. Plays a role in inhibiting the activity of glucokinase GCK and both glucose-induced and basal insulin secretion. The sequence is that of Midnolin (MIDN) from Homo sapiens (Human).